The following is a 225-amino-acid chain: THAP domain-containing protein 1 B (225 aa).

The segment at 5–57 adopts a THAP-type zinc-finger fold; the sequence is CSAYGCKNRYDKDRPISFHKFPLKRPLLCKKWEAAVRRADFKPTKYSSICSDH. Residues 139 to 194 adopt a coiled-coil conformation; the sequence is VEDTVHQRRRIQQLEEQVDKLRKKLKIANQKCRRQERSLEKLEKEVSEYREAKGSG.

The protein belongs to the THAP1 family.

Its subcellular location is the nucleus. It is found in the nucleoplasm. In terms of biological role, DNA-binding transcription regulator that regulates endothelial cell proliferation and G1/S cell-cycle progression. Specifically binds the 5'-[AT]NTNN[GT]GGCA[AGT]-3' core DNA sequence and acts by modulating expression of pRB-E2F cell-cycle target genes. The protein is THAP domain-containing protein 1 B (thap1-b) of Xenopus laevis (African clawed frog).